Here is a 447-residue protein sequence, read N- to C-terminus: Glutamyl-tRNA reductase (447 aa).

Substrate contacts are provided by residues 45–48 (TCNR), serine 111, 116–118 (ETE), and glutamine 122. The Nucleophile role is filled by cysteine 46. NADP(+) is bound at residue 191-196 (GTGKYA).

It belongs to the glutamyl-tRNA reductase family. In terms of assembly, homodimer.

The catalysed reaction is (S)-4-amino-5-oxopentanoate + tRNA(Glu) + NADP(+) = L-glutamyl-tRNA(Glu) + NADPH + H(+). Its pathway is porphyrin-containing compound metabolism; protoporphyrin-IX biosynthesis; 5-aminolevulinate from L-glutamyl-tRNA(Glu): step 1/2. In terms of biological role, catalyzes the NADPH-dependent reduction of glutamyl-tRNA(Glu) to glutamate 1-semialdehyde (GSA). This is Glutamyl-tRNA reductase from Tropheryma whipplei (strain Twist) (Whipple's bacillus).